We begin with the raw amino-acid sequence, 130 residues long: Phosphoribosyl-AMP cyclohydrolase (130 aa).

Asp77 is a Mg(2+) binding site. Cys78 lines the Zn(2+) pocket. Residues Asp79 and Asp81 each contribute to the Mg(2+) site. The Zn(2+) site is built by Cys95 and Cys102.

Belongs to the PRA-CH family. As to quaternary structure, homodimer. Requires Mg(2+) as cofactor. Zn(2+) is required as a cofactor.

The protein resides in the cytoplasm. The catalysed reaction is 1-(5-phospho-beta-D-ribosyl)-5'-AMP + H2O = 1-(5-phospho-beta-D-ribosyl)-5-[(5-phospho-beta-D-ribosylamino)methylideneamino]imidazole-4-carboxamide. It functions in the pathway amino-acid biosynthesis; L-histidine biosynthesis; L-histidine from 5-phospho-alpha-D-ribose 1-diphosphate: step 3/9. Its function is as follows. Catalyzes the hydrolysis of the adenine ring of phosphoribosyl-AMP. The sequence is that of Phosphoribosyl-AMP cyclohydrolase from Pseudomonas entomophila (strain L48).